A 413-amino-acid chain; its full sequence is Multifunctional CCA protein (413 aa).

Gly8 and Arg11 together coordinate ATP. Gly8 and Arg11 together coordinate CTP. Mg(2+) contacts are provided by Asp21 and Asp23. Positions 91, 137, and 140 each coordinate ATP. Positions 91, 137, and 140 each coordinate CTP. The 102-residue stretch at 228 to 329 (TGIHTLMVLE…VKIFDKADLW (102 aa)) folds into the HD domain.

Belongs to the tRNA nucleotidyltransferase/poly(A) polymerase family. Bacterial CCA-adding enzyme type 1 subfamily. As to quaternary structure, monomer. Can also form homodimers and oligomers. Mg(2+) is required as a cofactor. It depends on Ni(2+) as a cofactor.

It carries out the reaction a tRNA precursor + 2 CTP + ATP = a tRNA with a 3' CCA end + 3 diphosphate. It catalyses the reaction a tRNA with a 3' CCA end + 2 CTP + ATP = a tRNA with a 3' CCACCA end + 3 diphosphate. Its function is as follows. Catalyzes the addition and repair of the essential 3'-terminal CCA sequence in tRNAs without using a nucleic acid template. Adds these three nucleotides in the order of C, C, and A to the tRNA nucleotide-73, using CTP and ATP as substrates and producing inorganic pyrophosphate. tRNA 3'-terminal CCA addition is required both for tRNA processing and repair. Also involved in tRNA surveillance by mediating tandem CCA addition to generate a CCACCA at the 3' terminus of unstable tRNAs. While stable tRNAs receive only 3'-terminal CCA, unstable tRNAs are marked with CCACCA and rapidly degraded. The protein is Multifunctional CCA protein of Shewanella sediminis (strain HAW-EB3).